The sequence spans 471 residues: Glutamate--tRNA ligase (471 aa).

The 'HIGH' region motif lies at 9 to 19 (PSPTGYLHVGG). Positions 98, 100, 125, and 127 each coordinate Zn(2+). The 'KMSKS' region motif lies at 237 to 241 (KLSKR). Residue Lys240 participates in ATP binding.

This sequence belongs to the class-I aminoacyl-tRNA synthetase family. Glutamate--tRNA ligase type 1 subfamily. In terms of assembly, monomer. The cofactor is Zn(2+).

Its subcellular location is the cytoplasm. It carries out the reaction tRNA(Glu) + L-glutamate + ATP = L-glutamyl-tRNA(Glu) + AMP + diphosphate. Its function is as follows. Catalyzes the attachment of glutamate to tRNA(Glu) in a two-step reaction: glutamate is first activated by ATP to form Glu-AMP and then transferred to the acceptor end of tRNA(Glu). This Escherichia coli O6:K15:H31 (strain 536 / UPEC) protein is Glutamate--tRNA ligase.